The chain runs to 215 residues: Osteoclast-stimulating factor 1 (215 aa).

Ser-2 carries the post-translational modification N-acetylserine. Residues 12 to 71 enclose the SH3 domain; that stretch reads GQVKVFRALYTFEPRTPDELYFEEGDIIYITDMSDTSWWKGTCKGRTGLIPSNYVAEQAE. ANK repeat units lie at residues 72 to 101, 105 to 135, and 139 to 168; these read SIDN…GVNG, AGST…ELNQ, and LGDT…RTDL. The disordered stretch occupies residues 192-215; sequence KQQGTDGARTLSNAEDYLDDEDSD. Thr-201 carries the post-translational modification Phosphothreonine. 2 positions are modified to phosphoserine: Ser-203 and Ser-214.

In terms of assembly, interacts with C-SRC and SMN1. Interacts with FASLG.

Its subcellular location is the cytoplasm. Functionally, induces bone resorption, acting probably through a signaling cascade which results in the secretion of factor(s) enhancing osteoclast formation and activity. This Mus musculus (Mouse) protein is Osteoclast-stimulating factor 1 (Ostf1).